A 478-amino-acid polypeptide reads, in one-letter code: UDP-N-acetylmuramate--L-alanine ligase (478 aa).

Residue 130 to 136 (GTHGKTT) participates in ATP binding.

The protein belongs to the MurCDEF family.

It is found in the cytoplasm. The catalysed reaction is UDP-N-acetyl-alpha-D-muramate + L-alanine + ATP = UDP-N-acetyl-alpha-D-muramoyl-L-alanine + ADP + phosphate + H(+). Its pathway is cell wall biogenesis; peptidoglycan biosynthesis. Functionally, cell wall formation. This is UDP-N-acetylmuramate--L-alanine ligase from Microcystis aeruginosa (strain NIES-843 / IAM M-2473).